The sequence spans 152 residues: Ribosomal RNA large subunit methyltransferase H (152 aa).

S-adenosyl-L-methionine is bound by residues Leu-70, Gly-102, and 120-125; that span reads LSPMTF.

It belongs to the RNA methyltransferase RlmH family. As to quaternary structure, homodimer.

It is found in the cytoplasm. It carries out the reaction pseudouridine(1915) in 23S rRNA + S-adenosyl-L-methionine = N(3)-methylpseudouridine(1915) in 23S rRNA + S-adenosyl-L-homocysteine + H(+). In terms of biological role, specifically methylates the pseudouridine at position 1915 (m3Psi1915) in 23S rRNA. The protein is Ribosomal RNA large subunit methyltransferase H of Pelobacter propionicus (strain DSM 2379 / NBRC 103807 / OttBd1).